We begin with the raw amino-acid sequence, 261 residues long: UPF0246 protein Reut_A1014 (261 aa).

Belongs to the UPF0246 family.

The chain is UPF0246 protein Reut_A1014 from Cupriavidus pinatubonensis (strain JMP 134 / LMG 1197) (Cupriavidus necator (strain JMP 134)).